A 436-amino-acid polypeptide reads, in one-letter code: 3-ketoacyl-CoA thiolase (436 aa).

Cys99 acts as the Acyl-thioester intermediate in catalysis. Residues His392 and Cys422 each act as proton acceptor in the active site.

The protein belongs to the thiolase-like superfamily. Thiolase family. As to quaternary structure, heterotetramer of two alpha chains (FadJ) and two beta chains (FadI).

It localises to the cytoplasm. The catalysed reaction is an acyl-CoA + acetyl-CoA = a 3-oxoacyl-CoA + CoA. The protein operates within lipid metabolism; fatty acid beta-oxidation. Its function is as follows. Catalyzes the final step of fatty acid oxidation in which acetyl-CoA is released and the CoA ester of a fatty acid two carbons shorter is formed. The sequence is that of 3-ketoacyl-CoA thiolase from Escherichia coli O7:K1 (strain IAI39 / ExPEC).